We begin with the raw amino-acid sequence, 253 residues long: 5-oxoprolinase subunit A (253 aa).

It belongs to the LamB/PxpA family. Forms a complex composed of PxpA, PxpB and PxpC.

The enzyme catalyses 5-oxo-L-proline + ATP + 2 H2O = L-glutamate + ADP + phosphate + H(+). In terms of biological role, catalyzes the cleavage of 5-oxoproline to form L-glutamate coupled to the hydrolysis of ATP to ADP and inorganic phosphate. This is 5-oxoprolinase subunit A from Bacillus cereus (strain AH187).